We begin with the raw amino-acid sequence, 85 residues long: Putative regulatory protein DICTH_1339 (85 aa).

This sequence belongs to the RemA family.

This Dictyoglomus thermophilum (strain ATCC 35947 / DSM 3960 / H-6-12) protein is Putative regulatory protein DICTH_1339.